The following is a 311-amino-acid chain: Protein translocase subunit SecF (311 aa).

6 consecutive transmembrane segments (helical) span residues 19–39 (AIYA…TQGL), 142–162 (MLAM…RFEL), 166–186 (LGAV…FSVL), 192–212 (LVVV…TIVV), 245–265 (ITSL…GAVI), and 272–292 (LLFG…PLVL).

This sequence belongs to the SecD/SecF family. SecF subfamily. As to quaternary structure, forms a complex with SecD. Part of the essential Sec protein translocation apparatus which comprises SecA, SecYEG and auxiliary proteins SecDF-YajC and YidC.

It localises to the cell inner membrane. Functionally, part of the Sec protein translocase complex. Interacts with the SecYEG preprotein conducting channel. SecDF uses the proton motive force (PMF) to complete protein translocation after the ATP-dependent function of SecA. This Magnetococcus marinus (strain ATCC BAA-1437 / JCM 17883 / MC-1) protein is Protein translocase subunit SecF.